The following is a 907-amino-acid chain: Whirlin (907 aa).

The 84-residue stretch at 140–223 (LVSLRRAKAH…LVLSVYSAGR (84 aa)) folds into the PDZ 1 domain. Residues 243–264 (SISPPSGLPQPHGGALRQQEGD) are disordered. The PDZ 2 domain occupies 279–361 (KVNLVLGDGR…LILTVKDVGR (83 aa)). 4 disordered regions span residues 502-540 (SMKA…TVSS), 565-663 (SVDD…SSKR), 684-717 (QSPP…QTGT), and 742-815 (PQTR…PTST). Low complexity predominate over residues 521 to 540 (SYSDTGSSTGSHGTSTTVSS). Polar residues predominate over residues 609 to 626 (PPSSMPSCSGTVFSAPQN). The segment covering 628–642 (SPPAGTAPTPGTSSA) has biased composition (low complexity). A Phosphoserine modification is found at Ser-685. Positions 743–762 (QTRTASTLSQLSDSGQTLSE) are enriched in polar residues. Basic and acidic residues predominate over residues 789-800 (SSKELPRNERPT). The PDZ 3 domain occupies 816–899 (LVRVKKSAAT…TKDRDYIDFL (84 aa)).

As to quaternary structure, forms homooligomers. Interacts (via C-terminal PDZ domain) with MYO15A; this interaction is necessary for localization of WHRN to stereocilia tips. Interacts (via C-terminal PDZ domain) with MPP1/p55. Interacts with LRRC4C/NGL1. Interacts with MYO7A. Interacts with RPGR. Interacts with EPS8. Interacts with CASK. Interacts with CIB2. Component of USH2 complex, composed of ADGRV1, PDZD7, USH2A and WHRN. Interacts (via PDZ domains) with PDZD7; the interaction is direct. Interacts (via N-terminal PDZ domain) with USH2A (via cytoplasmic region). Interacts with ADGRV1/MASS1 (via cytoplasmic region).

The protein resides in the cytoplasm. It localises to the cell projection. Its subcellular location is the stereocilium. It is found in the growth cone. The protein localises to the photoreceptor inner segment. The protein resides in the synapse. Involved in hearing and vision as member of the USH2 complex. Necessary for elongation and maintenance of inner and outer hair cell stereocilia in the organ of Corti in the inner ear. Involved in the maintenance of the hair bundle ankle region, which connects stereocilia in cochlear hair cells of the inner ear. In retina photoreceptors, required for the maintenance of periciliary membrane complex that seems to play a role in regulating intracellular protein transport. The chain is Whirlin from Homo sapiens (Human).